A 1574-amino-acid chain; its full sequence is Pentafunctional AROM polypeptide (1574 aa).

The tract at residues 1-384 is 3-dehydroquinate synthase; that stretch reads MSCSNNTEPT…HEPRATTVED (384 aa). NAD(+)-binding positions include 49–51, 85–88, 116–118, and Asp-121; these read DTN, EISK, and GGV. Arg-132 serves as a coordination point for 7-phospho-2-dehydro-3-deoxy-D-arabino-heptonate. Position 141–142 (141–142) interacts with NAD(+); the sequence is TT. The 7-phospho-2-dehydro-3-deoxy-D-arabino-heptonate site is built by Asp-148 and Lys-154. Lys-163 contacts NAD(+). Asn-164 provides a ligand contact to 7-phospho-2-dehydro-3-deoxy-D-arabino-heptonate. NAD(+) is bound by residues 181-184 and Asn-192; that span reads FLET. Glu-196 is a binding site for Zn(2+). 7-phospho-2-dehydro-3-deoxy-D-arabino-heptonate is bound by residues 196 to 199 and Lys-250; that span reads EVIK. Glu-260 serves as the catalytic Proton acceptor; for 3-dehydroquinate synthase activity. Residues 264-268 and His-271 contribute to the 7-phospho-2-dehydro-3-deoxy-D-arabino-heptonate site; that span reads RNLLN. A Zn(2+)-binding site is contributed by His-271. Residue His-275 is the Proton acceptor; for 3-dehydroquinate synthase activity of the active site. 7-phospho-2-dehydro-3-deoxy-D-arabino-heptonate-binding residues include His-287 and Lys-356. His-287 contributes to the Zn(2+) binding site. The interval 397–837 is EPSP synthase; it reads ITPGVSTKLA…WDTLSQSFGL (441 aa). The active-site For EPSP synthase activity is the Cys-819. Positions 858-1052 are shikimate kinase; that stretch reads TRSVFIVGMR…TAKEQSFFVS (195 aa). 865–872 is an ATP binding site; sequence GMRGAGKT. A 3-dehydroquinase region spans residues 1053–1266; the sequence is LTVPSVDSAV…AAPGQLSAAE (214 aa). Residue His-1169 is the Proton acceptor; for 3-dehydroquinate dehydratase activity of the active site. The active-site Schiff-base intermediate with substrate; for 3-dehydroquinate dehydratase activity is Lys-1197. The interval 1279–1574 is shikimate dehydrogenase; the sequence is AQSFHLFGKP…NGDEIPTSTD (296 aa).

This sequence in the N-terminal section; belongs to the sugar phosphate cyclases superfamily. Dehydroquinate synthase family. It in the 2nd section; belongs to the EPSP synthase family. The protein in the 3rd section; belongs to the shikimate kinase family. In the 4th section; belongs to the type-I 3-dehydroquinase family. This sequence in the C-terminal section; belongs to the shikimate dehydrogenase family. Homodimer. Zn(2+) serves as cofactor.

Its subcellular location is the cytoplasm. The catalysed reaction is 7-phospho-2-dehydro-3-deoxy-D-arabino-heptonate = 3-dehydroquinate + phosphate. The enzyme catalyses 3-dehydroquinate = 3-dehydroshikimate + H2O. It catalyses the reaction shikimate + NADP(+) = 3-dehydroshikimate + NADPH + H(+). It carries out the reaction shikimate + ATP = 3-phosphoshikimate + ADP + H(+). The catalysed reaction is 3-phosphoshikimate + phosphoenolpyruvate = 5-O-(1-carboxyvinyl)-3-phosphoshikimate + phosphate. It participates in metabolic intermediate biosynthesis; chorismate biosynthesis; chorismate from D-erythrose 4-phosphate and phosphoenolpyruvate: step 2/7. Its pathway is metabolic intermediate biosynthesis; chorismate biosynthesis; chorismate from D-erythrose 4-phosphate and phosphoenolpyruvate: step 3/7. The protein operates within metabolic intermediate biosynthesis; chorismate biosynthesis; chorismate from D-erythrose 4-phosphate and phosphoenolpyruvate: step 4/7. It functions in the pathway metabolic intermediate biosynthesis; chorismate biosynthesis; chorismate from D-erythrose 4-phosphate and phosphoenolpyruvate: step 5/7. It participates in metabolic intermediate biosynthesis; chorismate biosynthesis; chorismate from D-erythrose 4-phosphate and phosphoenolpyruvate: step 6/7. The AROM polypeptide catalyzes 5 consecutive enzymatic reactions in prechorismate polyaromatic amino acid biosynthesis. The sequence is that of Pentafunctional AROM polypeptide from Verticillium alfalfae (strain VaMs.102 / ATCC MYA-4576 / FGSC 10136) (Verticillium wilt of alfalfa).